The sequence spans 261 residues: MTKFIGCIDLHNGEVKQIVGGTLTSKKEDVPKTNFVSQHPSSYYAKLYKDRDVQGCHVIKLGPNNDDAAREALQESPQFLQVGGGINDTNCLEWLKWASKVIVTSWLFTKEGHFQLKRLERLTELCGKDRIVVDLSCRKTQDGRWIVAMNKWQTLTDLELNADTFRELRKYTNEFLIHAADVEGLCGGIDELLVSKLFEWTKDYDDLKIVYAGGAKSVDDLKLVDELSHGKVDLTFGSSLDIFGGNLVKFEDCCRWNEKQG.

This sequence belongs to the HisA/HisF family.

It localises to the cytoplasm. The catalysed reaction is 1-(5-phospho-beta-D-ribosyl)-5-[(5-phospho-beta-D-ribosylamino)methylideneamino]imidazole-4-carboxamide = 5-[(5-phospho-1-deoxy-D-ribulos-1-ylimino)methylamino]-1-(5-phospho-beta-D-ribosyl)imidazole-4-carboxamide. It participates in amino-acid biosynthesis; L-histidine biosynthesis; L-histidine from 5-phospho-alpha-D-ribose 1-diphosphate: step 4/9. Catalyzes the isomerization of the aminoaldose moiety of ProFAR to the aminoketose of PRFAR. This Saccharomyces cerevisiae (strain ATCC 204508 / S288c) (Baker's yeast) protein is 1-(5-phosphoribosyl)-5-[(5-phosphoribosylamino)methylideneamino] imidazole-4-carboxamide isomerase.